Reading from the N-terminus, the 222-residue chain is Ribonuclease HII (222 aa).

In terms of domain architecture, RNase H type-2 spans 17–206 (DLVAGVDEVG…VRAAHEARAS (190 aa)). 3 residues coordinate a divalent metal cation: D23, E24, and D115.

This sequence belongs to the RNase HII family. It depends on Mn(2+) as a cofactor. Requires Mg(2+) as cofactor.

The protein localises to the cytoplasm. The enzyme catalyses Endonucleolytic cleavage to 5'-phosphomonoester.. Its function is as follows. Endonuclease that specifically degrades the RNA of RNA-DNA hybrids. The protein is Ribonuclease HII of Pseudomonas savastanoi pv. phaseolicola (strain 1448A / Race 6) (Pseudomonas syringae pv. phaseolicola (strain 1448A / Race 6)).